A 66-amino-acid polypeptide reads, in one-letter code: MLCLPVFIILLLLASPAAPKSLETRIQNDLIRAGLTDADLKTEKGFLSGLLNVAGSVCCKVDTSCC.

The first 19 residues, 1 to 19 (MLCLPVFIILLLLASPAAP), serve as a signal peptide directing secretion. Positions 20–54 (KSLETRIQNDLIRAGLTDADLKTEKGFLSGLLNVA) are excised as a propeptide.

Belongs to the conotoxin T superfamily. Post-translationally, contains 2 disulfide bonds that can be either 'C1-C3, C2-C4' or 'C1-C4, C2-C3', since these disulfide connectivities have been observed for conotoxins with cysteine framework V (for examples, see AC P0DQQ7 and AC P81755). As to expression, expressed by the venom duct.

The protein resides in the secreted. The sequence is that of Conotoxin Lt5.6 from Conus litteratus (Lettered cone).